The sequence spans 1453 residues: NRPS-like tryptophan epimerase fscC (1453 aa).

Residues 37–433 (SYGELSAMSS…ATHLIRNCVV (397 aa)) are adenylation. Positions 544-626 (TGSRQSTRHK…LFHTSKSRFT (83 aa)) constitute a Carrier domain. An O-(pantetheine 4'-phosphoryl)serine modification is found at serine 586. Residues 639 to 1053 (FPLSPVQRFF…KDVLESAGVF (415 aa)) are epimerization (E) domain. The condensation stretch occupies residues 1181–1391 (FFGLQSNERA…AGSSLHQHNQ (211 aa)).

Belongs to the NRP synthetase family. Pantetheine 4'-phosphate serves as cofactor.

It functions in the pathway secondary metabolite biosynthesis. Functionally, NRPS-like tryptophan epimerase; part of the fragmented gene cluster that mediates the biosynthesis of fusarochromene, a tryptophan-derived metabolite closely related to a group of mycotoxins including fusarochromanone. Within the pathway, fscC catalyzes the first step via epimerization of L-tryptophan to provide the intermediate D-tryptophan. D-tryptophan is subsequently hydroxylated by the tryptophan 6-hydroxylase fscE to yield 6-hydroxytryptophan. The pyrrole ring undergoes cleavaged by the tryptophan 2,3-dioxygenase fscD and is finally converted to 4-hydroxykyrunenine by the hydrolase fscH. The NRPS-like oxidoreductase fscA reduces the carboxyl group to primary alcohol and the DMATS-type prenyltransferase fscG performs prenylation, followed by the formation of a chromene ring catalyzed by the oxidoreductase fscI, which leads to desacetylfusarochromene. Epoxidation by fscF and rearrangement reactions of chromene double bonds convert compound desacetylfusarochromene to fusarochromanones. Although specific acetyltransferases were not found near the fsc gene cluster, several predicted enzymes containing the N-acetyltransferase superfamily domain are present in the genome of F.equiseti. These predicted enzymes may have the potential to convert desacetylfusarochromene to fusarochromene. This Fusarium equiseti (Fusarium scirpi) protein is NRPS-like tryptophan epimerase fscC.